We begin with the raw amino-acid sequence, 297 residues long: tRNA pseudouridine synthase B (297 aa).

The active-site Nucleophile is Asp-44.

Belongs to the pseudouridine synthase TruB family. Type 1 subfamily.

It catalyses the reaction uridine(55) in tRNA = pseudouridine(55) in tRNA. In terms of biological role, responsible for synthesis of pseudouridine from uracil-55 in the psi GC loop of transfer RNAs. This Corynebacterium aurimucosum (strain ATCC 700975 / DSM 44827 / CIP 107346 / CN-1) (Corynebacterium nigricans) protein is tRNA pseudouridine synthase B.